We begin with the raw amino-acid sequence, 490 residues long: Cytochrome P450 2C1 (490 aa).

Cys435 contributes to the heme binding site.

It belongs to the cytochrome P450 family. The cofactor is heme.

Its subcellular location is the endoplasmic reticulum membrane. It localises to the microsome membrane. The catalysed reaction is an organic molecule + reduced [NADPH--hemoprotein reductase] + O2 = an alcohol + oxidized [NADPH--hemoprotein reductase] + H2O + H(+). Its function is as follows. Cytochromes P450 are a group of heme-thiolate monooxygenases. In liver microsomes, this enzyme is involved in an NADPH-dependent electron transport pathway. It oxidizes a variety of structurally unrelated compounds, including steroids, fatty acids, and xenobiotics. The polypeptide is Cytochrome P450 2C1 (CYP2C1) (Oryctolagus cuniculus (Rabbit)).